Reading from the N-terminus, the 354-residue chain is Cysteine and histidine-rich domain-containing protein morgana (354 aa).

Residues C4, C9, C23, H26, C41, C42, C58, H63, C140, C145, C159, H162, C177, C178, C194, and H199 each contribute to the Zn(2+) site. CHORD domains lie at 4-63 (CYNR…LAKH) and 140-199 (CKNN…YGEH). In terms of domain architecture, CS spans 210-301 (VVQCRYDWHQ…LEPGSWSNLN (92 aa)). S324 and S339 each carry phosphoserine.

Interacts with Hsp83.

Its subcellular location is the cytoplasm. It localises to the nucleus. It is found in the cytoskeleton. The protein localises to the spindle. In terms of biological role, regulates centrosome duplication and mitotic spindle dynamics. Also involved in controlling the size of dendritic arbors. May act as co-chaperone for Hsp83. During mitotic spindle assembly, regulates microtubule (MT) dynamics by binding to MTs and promoting MT polymerisation. Promotes the elongation and retraction of terminal branches in response to changes in body size, possibly acting downstream of the TORC2 pathway to enable proportional scaling of dendritic arbors. The polypeptide is Cysteine and histidine-rich domain-containing protein morgana (Drosophila melanogaster (Fruit fly)).